The chain runs to 485 residues: Glycogen synthase (485 aa).

Residue Lys20 coordinates ADP-alpha-D-glucose.

Belongs to the glycosyltransferase 1 family. Bacterial/plant glycogen synthase subfamily.

The catalysed reaction is [(1-&gt;4)-alpha-D-glucosyl](n) + ADP-alpha-D-glucose = [(1-&gt;4)-alpha-D-glucosyl](n+1) + ADP + H(+). It functions in the pathway glycan biosynthesis; glycogen biosynthesis. Its function is as follows. Synthesizes alpha-1,4-glucan chains using ADP-glucose. In Vibrio vulnificus (strain YJ016), this protein is Glycogen synthase.